We begin with the raw amino-acid sequence, 619 residues long: 1-deoxy-D-xylulose-5-phosphate synthase (619 aa).

Thiamine diphosphate-binding positions include histidine 74 and 115–117; that span reads GHS. Aspartate 146 serves as a coordination point for Mg(2+). Thiamine diphosphate-binding positions include 147–148, asparagine 175, tyrosine 285, and glutamate 365; that span reads GA. Residue asparagine 175 coordinates Mg(2+).

It belongs to the transketolase family. DXPS subfamily. In terms of assembly, homodimer. Mg(2+) serves as cofactor. It depends on thiamine diphosphate as a cofactor.

It catalyses the reaction D-glyceraldehyde 3-phosphate + pyruvate + H(+) = 1-deoxy-D-xylulose 5-phosphate + CO2. The protein operates within metabolic intermediate biosynthesis; 1-deoxy-D-xylulose 5-phosphate biosynthesis; 1-deoxy-D-xylulose 5-phosphate from D-glyceraldehyde 3-phosphate and pyruvate: step 1/1. Catalyzes the acyloin condensation reaction between C atoms 2 and 3 of pyruvate and glyceraldehyde 3-phosphate to yield 1-deoxy-D-xylulose-5-phosphate (DXP). The protein is 1-deoxy-D-xylulose-5-phosphate synthase of Clostridium perfringens (strain SM101 / Type A).